A 296-amino-acid chain; its full sequence is 4-hydroxy-tetrahydrodipicolinate synthase (296 aa).

Residue threonine 49 participates in pyruvate binding. Catalysis depends on tyrosine 137, which acts as the Proton donor/acceptor. The Schiff-base intermediate with substrate role is filled by lysine 165. Residue valine 207 coordinates pyruvate.

Belongs to the DapA family. In terms of assembly, homotetramer; dimer of dimers.

Its subcellular location is the cytoplasm. The enzyme catalyses L-aspartate 4-semialdehyde + pyruvate = (2S,4S)-4-hydroxy-2,3,4,5-tetrahydrodipicolinate + H2O + H(+). Its pathway is amino-acid biosynthesis; L-lysine biosynthesis via DAP pathway; (S)-tetrahydrodipicolinate from L-aspartate: step 3/4. Catalyzes the condensation of (S)-aspartate-beta-semialdehyde [(S)-ASA] and pyruvate to 4-hydroxy-tetrahydrodipicolinate (HTPA). The protein is 4-hydroxy-tetrahydrodipicolinate synthase of Nitrobacter hamburgensis (strain DSM 10229 / NCIMB 13809 / X14).